A 210-amino-acid polypeptide reads, in one-letter code: Regulator of G-protein signaling 17 (210 aa).

Residues 1–21 (MRKRQQSQNEGTPAVSQAPGN) are disordered. The region spanning 84 to 200 (NFDKMMKAPA…LNSQIYKSFV (117 aa)) is the RGS domain. Y137 carries the phosphotyrosine modification.

As to quaternary structure, interacts with GNAI1 and GNAQ. Interacts with GNAZ and GNAI2. Interacts with OPRM1. Forms a complex with mu-opioid receptors and G(alpha)z/i2 subunits, including GNAZ and GNAI2; the formation of this complex results in mu-opioid receptor desensitization. Interacts with HINT1. N- and O-glycosylated in synapsomal membranes. In terms of processing, serine phosphorylated in synapsomal membranes. Post-translationally, sumoylated with SUMO1 and SUM02 in synaptosomes. The sumoylated forms act as a scaffold for sequestering mu-opioid receptor-activated G(alpha) subunits. Desumoylated by HINT1. Predominantly expressed in the cerebellum. Also expressed in the cortex and medulla. Weakly expressed in a number of peripheral tissues notably spleen, lung and leukocytes.

It is found in the membrane. The protein resides in the synapse. The protein localises to the synaptosome. Its subcellular location is the nucleus. It localises to the cytoplasm. Regulates G protein-coupled receptor signaling cascades, including signaling via muscarinic acetylcholine receptor CHRM2 and dopamine receptor DRD2. Inhibits signal transduction by increasing the GTPase activity of G protein alpha subunits, thereby driving them into their inactive GDP-bound form. Binds selectively to GNAZ and GNAI2 subunits, accelerates their GTPase activity and regulates their signaling activities. Negatively regulates mu-opioid receptor-mediated activation of the G-proteins. The protein is Regulator of G-protein signaling 17 (RGS17) of Homo sapiens (Human).